The primary structure comprises 164 residues: Large ribosomal subunit protein uL10 (164 aa).

This sequence belongs to the universal ribosomal protein uL10 family. Part of the ribosomal stalk of the 50S ribosomal subunit. The N-terminus interacts with L11 and the large rRNA to form the base of the stalk. The C-terminus forms an elongated spine to which L12 dimers bind in a sequential fashion forming a multimeric L10(L12)X complex.

Its function is as follows. Forms part of the ribosomal stalk, playing a central role in the interaction of the ribosome with GTP-bound translation factors. The protein is Large ribosomal subunit protein uL10 (rplJ) of Helicobacter pylori (strain ATCC 700392 / 26695) (Campylobacter pylori).